The primary structure comprises 408 residues: LL-diaminopimelate aminotransferase (408 aa).

The substrate site is built by Tyr-15 and Gly-42. Pyridoxal 5'-phosphate-binding positions include Tyr-72, 108–109 (SK), Tyr-132, Asn-187, Tyr-218, and 246–248 (SFS). 3 residues coordinate substrate: Lys-109, Tyr-132, and Asn-187. Lys-249 carries the N6-(pyridoxal phosphate)lysine modification. 2 residues coordinate pyridoxal 5'-phosphate: Arg-257 and Asn-292. Substrate-binding residues include Asn-292 and Arg-388.

It belongs to the class-I pyridoxal-phosphate-dependent aminotransferase family. LL-diaminopimelate aminotransferase subfamily. As to quaternary structure, homodimer. Pyridoxal 5'-phosphate is required as a cofactor.

The enzyme catalyses (2S,6S)-2,6-diaminopimelate + 2-oxoglutarate = (S)-2,3,4,5-tetrahydrodipicolinate + L-glutamate + H2O + H(+). The protein operates within amino-acid biosynthesis; L-lysine biosynthesis via DAP pathway; LL-2,6-diaminopimelate from (S)-tetrahydrodipicolinate (aminotransferase route): step 1/1. In terms of biological role, involved in the synthesis of meso-diaminopimelate (m-DAP or DL-DAP), required for both lysine and peptidoglycan biosynthesis. Catalyzes the direct conversion of tetrahydrodipicolinate to LL-diaminopimelate. In Prochlorococcus marinus (strain MIT 9515), this protein is LL-diaminopimelate aminotransferase.